The primary structure comprises 183 residues: A-type ATP synthase subunit E (183 aa).

This sequence belongs to the V-ATPase E subunit family. In terms of assembly, has multiple subunits with at least A(3), B(3), C, D, E, F, H, I and proteolipid K(x).

It is found in the cell membrane. Functionally, component of the A-type ATP synthase that produces ATP from ADP in the presence of a proton gradient across the membrane. This Methanosarcina acetivorans (strain ATCC 35395 / DSM 2834 / JCM 12185 / C2A) protein is A-type ATP synthase subunit E.